Consider the following 180-residue polypeptide: ATP synthase subunit delta, chloroplastic (180 aa).

The protein belongs to the ATPase delta chain family. F-type ATPases have 2 components, F(1) - the catalytic core - and F(0) - the membrane proton channel. F(1) has five subunits: alpha(3), beta(3), gamma(1), delta(1), epsilon(1). CF(0) has four main subunits: a(1), b(1), b'(1) and c(10-14). The alpha and beta chains form an alternating ring which encloses part of the gamma chain. F(1) is attached to F(0) by a central stalk formed by the gamma and epsilon chains, while a peripheral stalk is formed by the delta, b and b' chains.

It localises to the plastid. The protein localises to the chloroplast thylakoid membrane. In terms of biological role, f(1)F(0) ATP synthase produces ATP from ADP in the presence of a proton or sodium gradient. F-type ATPases consist of two structural domains, F(1) containing the extramembraneous catalytic core and F(0) containing the membrane proton channel, linked together by a central stalk and a peripheral stalk. During catalysis, ATP synthesis in the catalytic domain of F(1) is coupled via a rotary mechanism of the central stalk subunits to proton translocation. Functionally, this protein is part of the stalk that links CF(0) to CF(1). It either transmits conformational changes from CF(0) to CF(1) or is implicated in proton conduction. The sequence is that of ATP synthase subunit delta, chloroplastic from Emiliania huxleyi (Coccolithophore).